The chain runs to 142 residues: Hemoglobin subunit alpha-1 (142 aa).

The residue at position 1 (Ser1) is an N-acetylserine. In terms of domain architecture, Globin spans 1-142; the sequence is SLSVKDKAAV…VALALAERYR (142 aa). O2 is bound at residue His59. His88 provides a ligand contact to heme b.

Belongs to the globin family. In terms of assembly, hb 1 is a heterotetramer of two alpha-1 and two beta-1 chains. In terms of tissue distribution, red blood cells.

Its function is as follows. Involved in oxygen transport from gills to the various peripheral tissues. The sequence is that of Hemoglobin subunit alpha-1 (hba1) from Gobionotothen gibberifrons (Humped rockcod).